Here is a 144-residue protein sequence, read N- to C-terminus: Transcriptional regulator SlyA (144 aa).

Residues 2–135 (ESPLGSDLSR…LSQMISKLEK (134 aa)) enclose the HTH marR-type domain. Residues 49–72 (QIQLAKAIGIEQPSLVRTLDQLEE) constitute a DNA-binding region (H-T-H motif).

The protein belongs to the SlyA family. As to quaternary structure, homodimer.

Transcription regulator that can specifically activate or repress expression of target genes. The chain is Transcriptional regulator SlyA from Wigglesworthia glossinidia brevipalpis.